Consider the following 608-residue polypeptide: Epsin-3 (608 aa).

Residues Arg-8, Lys-11, Arg-25, Asn-30, Arg-63, and His-73 each coordinate a 1,2-diacyl-sn-glycero-3-phospho-(1D-myo-inositol-4,5-bisphosphate). An ENTH domain is found at 12–144 (NIVHNYSEAE…KDEERLRQER (133 aa)). Disordered stretches follow at residues 150–266 (TKER…QSSI) and 281–475 (STHC…GPSA). Over residues 174–189 (GSPSSYTSASSSPRYA) the composition is skewed to low complexity. 2 positions are modified to phosphoserine: Ser-184 and Ser-185. The region spanning 202 to 221 (EEELQLQLALAMSREEAEKG) is the UIM domain. Basic and acidic residues-rich tracts occupy residues 214-229 (SREE…KGDD) and 240-260 (GQRR…EKLK). A run of 7 repeats spans residues 287–289 (DPW), 310–312 (DPW), 337–339 (EPW), 353–355 (DPW), 370–372 (DPW), 495–497 (NPF), and 508–510 (NPF). Residues 287-372 (DPWDIPGLRP…KLPSTGVDPW (86 aa)) form a 5 X 3 AA repeats of [DE]-P-W region. Positions 346–363 (PSGPPITDPWAPSSPTPK) are enriched in pro residues. The tract at residues 495-607 (NPFLTGLSAP…LPPQAGTNPF (113 aa)) is 3 X 3 AA repeats of N-P-F. Disordered stretches follow at residues 498-530 (LTGL…SPAL) and 575-608 (GAFA…NPFL). The span at 578–588 (APPPASLPQPL) shows a compositional bias: pro residues. Repeat unit 3 spans residues 605 to 607 (NPF).

Belongs to the epsin family.

It is found in the cytoplasm. The protein localises to the cell cortex. The protein resides in the perinuclear region. It localises to the cytoplasmic vesicle. Its subcellular location is the clathrin-coated vesicle. It is found in the nucleus. The polypeptide is Epsin-3 (Epn3) (Rattus norvegicus (Rat)).